Consider the following 515-residue polypeptide: Zinc metalloproteinase-disintegrin BA-5A (515 aa).

The signal sequence occupies residues Met-1–Ser-20. Positions Ile-21–Ser-193 are excised as a propeptide. A Peptidase M12B domain is found at Arg-203–Pro-399. Asn-263 carries an N-linked (GlcNAc...) asparagine glycan. Cystine bridges form between Cys-314/Cys-394, Cys-354/Cys-378, Cys-356/Cys-361, Cys-410/Cys-429, Cys-421/Cys-439, Cys-423/Cys-434, Cys-433/Cys-456, Cys-447/Cys-453, Cys-452/Cys-478, Cys-465/Cys-485, and Cys-472/Cys-497. His-339 provides a ligand contact to Zn(2+). Residue Glu-340 is part of the active site. His-343 and His-349 together coordinate Zn(2+). Asn-377 carries N-linked (GlcNAc...) asparagine glycosylation. The Disintegrin domain occupies Pro-407 to Asn-493. Positions Glu-471–Asp-473 match the D/ECD-tripeptide motif.

This sequence belongs to the venom metalloproteinase (M12B) family. P-II subfamily. As to quaternary structure, monomer. Requires Zn(2+) as cofactor. As to expression, expressed by the venom gland.

Its subcellular location is the secreted. Its function is as follows. Snake venom zinc metalloprotease that possesses hemorrhagic activity and degrades alpha chain of fibrinogen (FGA). May inhibit alpha-2/beta-1 integrin (ITGA2/ITGB1). The sequence is that of Zinc metalloproteinase-disintegrin BA-5A from Bitis arietans (African puff adder).